Here is a 264-residue protein sequence, read N- to C-terminus: Granzyme K (264 aa).

Positions 1 to 24 (MTKFSSFSLFFLIVGAYMTHVCFN) are cleaved as a signal peptide. Positions 25-26 (ME) are cleaved as a propeptide — activation peptide. Positions 27 to 259 (IIGGKEVSPH…YQTWIKSNLV (233 aa)) constitute a Peptidase S1 domain. A disulfide bridge links Cys52 with Cys68. Residues His67 and Asp116 each act as charge relay system in the active site. Disulfide bonds link Cys149/Cys220, Cys181/Cys199, and Cys210/Cys234. Ser214 serves as the catalytic Charge relay system.

It belongs to the peptidase S1 family. Granzyme subfamily. In terms of tissue distribution, expressed in lung, spleen, thymus and peripheral blood leukocytes.

It localises to the secreted. Its subcellular location is the cytoplasmic granule. This is Granzyme K (GZMK) from Homo sapiens (Human).